A 549-amino-acid polypeptide reads, in one-letter code: Cation/acetate symporter ActP (549 aa).

The next 13 helical transmembrane spans lie at 33 to 53 (WQAI…TYWA), 77 to 97 (LAIA…ALVF), 103 to 123 (GLIY…LIAE), 148 to 168 (ILSA…QMVG), 183 to 203 (IAVV…GMLA), 206 to 226 (WVQI…AFMV), 262 to 282 (ISAL…PHIL), 303 to 323 (GFMG…IMLV), 355 to 375 (LFLG…VAGL), 404 to 424 (VSKI…VLFE), 428 to 448 (IAFM…PIIL), 464 to 484 (GGWL…TIWV), and 493 to 513 (IFPY…GIWF).

Belongs to the sodium:solute symporter (SSF) (TC 2.A.21) family.

It is found in the cell inner membrane. In terms of biological role, transports acetate. This chain is Cation/acetate symporter ActP, found in Salmonella agona (strain SL483).